The primary structure comprises 46 residues: Diuretic hormone (46 aa).

I46 is subject to Isoleucine amide.

Belongs to the sauvagine/corticotropin-releasing factor/urotensin I family.

It is found in the secreted. Its function is as follows. Regulation of fluid secretion. Stimulates primary urine secretion by Malpighian tubules and causes a dose-dependent stimulation of cAMP levels in the tubules. In Acheta domesticus (House cricket), this protein is Diuretic hormone.